A 391-amino-acid chain; its full sequence is Cystathionine beta-lyase MetC (391 aa).

Lys196 bears the N6-(pyridoxal phosphate)lysine mark.

Belongs to the trans-sulfuration enzymes family. As to quaternary structure, homotetramer. Pyridoxal 5'-phosphate is required as a cofactor.

It catalyses the reaction L,L-cystathionine + H2O = L-homocysteine + pyruvate + NH4(+). The enzyme catalyses an S-substituted L-cysteine + H2O = a thiol + pyruvate + NH4(+). It functions in the pathway amino-acid biosynthesis; L-methionine biosynthesis via de novo pathway; L-homocysteine from L-cystathionine: step 1/1. With respect to regulation, cystathionine beta-lyase activity is inhibited by sweat components such as glycine, serine and ammonium sulfate. Inhibited by cystathionine at a concentration higher than 6 mM. Its function is as follows. Catalyzes the transformation of cystathionine into homocysteine. Can also catalyze, at low levels, the conversion of cystathionine into methionine and the conversion of methionine into methanethiol. This Staphylococcus haemolyticus (strain JCSC1435) protein is Cystathionine beta-lyase MetC.